The following is an 829-amino-acid chain: Transmembrane protease serine 7 (829 aa).

The Cytoplasmic portion of the chain corresponds to 1–62 (MDKEKSDPSC…RAPFWNVQNK (62 aa)). Residues 26-52 (SVPGKLPGRRPPRKPIGKPRPRKQPKK) form a disordered region. A compositionally biased stretch (basic residues) spans 32–52 (PGRRPPRKPIGKPRPRKQPKK). Residues 63–83 (IILFTVFLFILAVTAWTLLWL) form a helical; Signal-anchor for type II membrane protein membrane-spanning segment. At 84 to 829 (YISKTESKDA…WIHKYVPSLL (746 aa)) the chain is on the extracellular side. One can recognise an SEA domain in the interval 92–220 (DAFYFVGMFR…DSVVLNAGLR (129 aa)). Intrachain disulfides connect C233/C259, C285/C308, and C351/C382. CUB domains lie at 233-346 (CSRY…FEVI) and 351-467 (CEST…YNIS). 2 N-linked (GlcNAc...) asparagine glycosylation sites follow: N401 and N465. LDL-receptor class A domains lie at 469–505 (PCPA…LFCV), 503–540 (FCVT…QNCT), and 544–581 (PCTS…EGCG). 9 disulfide bridges follow: C470–C482, C477–C495, C489–C504, C511–C530, C524–C539, C545–C557, C552–C571, C565–C580, and C617–C633. Residues 592-826 (IVGGSDSQEG…FVPWIHKYVP (235 aa)) form the Peptidase S1 domain. Active-site charge relay system residues include H632 and D680. Intrachain disulfides connect C716-C782, C748-C761, and C772-C802. Catalysis depends on S776, which acts as the Charge relay system.

The protein belongs to the peptidase S1 family. In terms of assembly, forms a heterodimer with SERPINA5. In terms of processing, N-glycosylated. Expressed in brain, eye, testis, skin, epididymis and salivary gland with lower levels in heart, skeletal muscle, thymus, ovary, prostate and uterus.

It is found in the cell membrane. In terms of biological role, serine protease which preferentially hydrolyzes peptides with Arg at the P1 position. In Mus musculus (Mouse), this protein is Transmembrane protease serine 7 (Tmprss7).